The following is a 281-amino-acid chain: 39kDa core protein OPG130 (281 aa).

The segment covering 1-22 has biased composition (polar residues); that stretch reads MDFFNKFSQGLAESSTPKSSIY. Disordered stretches follow at residues 1–33, 93–112, and 149–188; these read MDFFNKFSQGLAESSTPKSSIYYSEEKDPDTKK, LPSSTVPTPKPRQQTNTSSD, and NKDQKTTTPPSTQPSQTLPTTTCTQQSDGNISCTTPTVTP. A compositionally biased stretch (basic and acidic residues) spans 24–33; that stretch reads SEEKDPDTKK. Residues 94 to 112 are compositionally biased toward polar residues; the sequence is PSSTVPTPKPRQQTNTSSD. Residues 154-175 show a composition bias toward low complexity; it reads TTTPPSTQPSQTLPTTTCTQQS.

It belongs to the orthopoxvirus OPG130 family. In terms of assembly, interacts with OPG136 and its cleaved form. In terms of processing, its phosphorylation state is regulated by the OPG054 kinase and the OPG106 phosphatase.

The protein resides in the virion. The protein localises to the host endoplasmic reticulum-Golgi intermediate compartment membrane. Its function is as follows. Component of the virion core. Participates in virion assembly. The protein is 39kDa core protein OPG130 (OPG130) of Vaccinia virus (strain Western Reserve) (VACV).